The following is a 520-amino-acid chain: Glutamate--cysteine ligase (520 aa).

Belongs to the glutamate--cysteine ligase type 1 family. Type 1 subfamily.

The catalysed reaction is L-cysteine + L-glutamate + ATP = gamma-L-glutamyl-L-cysteine + ADP + phosphate + H(+). The protein operates within sulfur metabolism; glutathione biosynthesis; glutathione from L-cysteine and L-glutamate: step 1/2. This chain is Glutamate--cysteine ligase, found in Sodalis glossinidius (strain morsitans).